Here is a 250-residue protein sequence, read N- to C-terminus: Probable phosphatase VPA1527 (250 aa).

Zn(2+) contacts are provided by His-8, His-10, His-16, His-41, Glu-74, His-102, His-132, Asp-194, and His-196.

Belongs to the PHP family. Zn(2+) is required as a cofactor.

This chain is Probable phosphatase VPA1527, found in Vibrio parahaemolyticus serotype O3:K6 (strain RIMD 2210633).